Here is a 403-residue protein sequence, read N- to C-terminus: Dual-specificity RNA methyltransferase RlmN (403 aa).

Glutamate 126 functions as the Proton acceptor in the catalytic mechanism. The region spanning 132–375 (ETDRGTLCVS…VRTPRGRDIL (244 aa)) is the Radical SAM core domain. Cysteine 139 and cysteine 378 are disulfide-bonded. 3 residues coordinate [4Fe-4S] cluster: cysteine 146, cysteine 150, and cysteine 153. Residues 204 to 205 (GE), serine 236, 258 to 260 (SLH), and asparagine 335 each bind S-adenosyl-L-methionine. Cysteine 378 functions as the S-methylcysteine intermediate in the catalytic mechanism.

This sequence belongs to the radical SAM superfamily. RlmN family. The cofactor is [4Fe-4S] cluster.

The protein resides in the cytoplasm. It carries out the reaction adenosine(2503) in 23S rRNA + 2 reduced [2Fe-2S]-[ferredoxin] + 2 S-adenosyl-L-methionine = 2-methyladenosine(2503) in 23S rRNA + 5'-deoxyadenosine + L-methionine + 2 oxidized [2Fe-2S]-[ferredoxin] + S-adenosyl-L-homocysteine. It catalyses the reaction adenosine(37) in tRNA + 2 reduced [2Fe-2S]-[ferredoxin] + 2 S-adenosyl-L-methionine = 2-methyladenosine(37) in tRNA + 5'-deoxyadenosine + L-methionine + 2 oxidized [2Fe-2S]-[ferredoxin] + S-adenosyl-L-homocysteine. Functionally, specifically methylates position 2 of adenine 2503 in 23S rRNA and position 2 of adenine 37 in tRNAs. m2A2503 modification seems to play a crucial role in the proofreading step occurring at the peptidyl transferase center and thus would serve to optimize ribosomal fidelity. This Bradyrhizobium sp. (strain BTAi1 / ATCC BAA-1182) protein is Dual-specificity RNA methyltransferase RlmN.